We begin with the raw amino-acid sequence, 134 residues long: Cytochrome b5 (134 aa).

Ala2 carries the N-acetylalanine modification. Residues Lys7, Lys10, and Lys19 each carry the N6-acetyllysine modification. One can recognise a Cytochrome b5 heme-binding domain in the interval 9-85 (VKYYTLEEIQ…SKTYIIGELH (77 aa)). Residues His44 and His68 each coordinate heme. Residues 109 to 131 (WWTNWVIPAISALAVALMYRLYM) traverse the membrane as a helical segment.

The protein belongs to the cytochrome b5 family.

It localises to the endoplasmic reticulum membrane. The protein localises to the microsome membrane. In terms of biological role, cytochrome b5 is a membrane-bound hemoprotein functioning as an electron carrier for several membrane-bound oxygenases. It is also involved in several steps of the sterol biosynthesis pathway, particularly in the C-5 double bond introduction during the C-5 desaturation. This is Cytochrome b5 (Cyb5a) from Mus musculus (Mouse).